We begin with the raw amino-acid sequence, 488 residues long: Aerolysin (488 aa).

The first 24 residues, 1–24 (MMNRIITANLAFLASSLMLAQVQA), serve as a signal peptide directing secretion. Disulfide bonds link cysteine 43–cysteine 99 and cysteine 183–cysteine 188. The interval 69–85 (WQITGLADRWVIMGPGY) is interaction with host N-linked glycan. The interval 256–288 (YSLSEKVTTKNKFQWPLVGETELAIEIAASQSW) is part of the transmembrane beta-barrel after proteolytic activation of the toxin and insertion into the host membrane. The interval 346-355 (RWGGNAWYTH) is interaction with glycans from host GPI-anchor. Residues 444–488 (TRSAKAAQLRSASAEEVALTSVDLDSEALANEGFGNVSLTIVPVQ) constitute a propeptide that is removed on maturation.

Belongs to the aerolysin family. As to quaternary structure, homodimer in solution; homoheptamer in the host membrane. After binding to GPI-anchored proteins in target membranes and proteolytic removal of the C-terminal propeptide, the protein assembles into a heptameric pre-pore complex. A further conformation change leads to insertion into the host membrane. In terms of processing, proteolytic cleavage and subsequent release of the propeptide trigger a major conformation change, leading to the formation of a heptameric pre-pore that then inserts into the host membrane.

It localises to the secreted. Its subcellular location is the host cell membrane. Its function is as follows. Secreted, cytolytic toxin that forms pores in host membranes after proteolytic removal of a C-terminal propeptide, leading to destruction of the membrane permeability barrier and cell death. The pores are formed by transmembrane beta-strands and are approximately 3 nm in diameter. This chain is Aerolysin (asa1), found in Aeromonas sobria.